The chain runs to 263 residues: Proteasome subunit beta type-4 (263 aa).

The residue at position 1 (Met-1) is an N-acetylmethionine. Residues 1–44 constitute a propeptide that is removed on maturation; sequence MEAFWESRTGHWAGGPAPGQFYRVPSTPSCLMDPMSAPARPITR. At Ser-26 the chain carries Phosphoserine. Tyr-101 carries the post-translational modification Phosphotyrosine.

The protein belongs to the peptidase T1B family. In terms of assembly, the 26S proteasome consists of a 20S proteasome core and two 19S regulatory subunits. The 20S proteasome core is a barrel-shaped complex made of 28 subunits that are arranged in four stacked rings. The two outer rings are each formed by seven alpha subunits, and the two inner rings are formed by seven beta subunits. The proteolytic activity is exerted by three beta-subunits PSMB5, PSMB6 and PSMB7. Forms a ternary complex with SMAD1 and OAZ1 before PSMB4 is incorporated into the 20S proteasome. Interacts with PRPF19.

It localises to the cytoplasm. The protein localises to the nucleus. In terms of biological role, non-catalytic component of the 20S core proteasome complex involved in the proteolytic degradation of most intracellular proteins. This complex plays numerous essential roles within the cell by associating with different regulatory particles. Associated with two 19S regulatory particles, forms the 26S proteasome and thus participates in the ATP-dependent degradation of ubiquitinated proteins. The 26S proteasome plays a key role in the maintenance of protein homeostasis by removing misfolded or damaged proteins that could impair cellular functions, and by removing proteins whose functions are no longer required. Associated with the PA200 or PA28, the 20S proteasome mediates ubiquitin-independent protein degradation. This type of proteolysis is required in several pathways including spermatogenesis (20S-PA200 complex) or generation of a subset of MHC class I-presented antigenic peptides (20S-PA28 complex). SMAD1/OAZ1/PSMB4 complex mediates the degradation of the CREBBP/EP300 repressor SNIP1. In Rattus norvegicus (Rat), this protein is Proteasome subunit beta type-4 (Psmb4).